The following is a 421-amino-acid chain: UDP-N-acetylglucosamine 1-carboxyvinyltransferase (421 aa).

22 to 23 (KN) contacts phosphoenolpyruvate. UDP-N-acetyl-alpha-D-glucosamine is bound at residue R93. C117 acts as the Proton donor in catalysis. C117 is subject to 2-(S-cysteinyl)pyruvic acid O-phosphothioketal. Residues 122–126 (RPVDL), D308, and V330 contribute to the UDP-N-acetyl-alpha-D-glucosamine site.

This sequence belongs to the EPSP synthase family. MurA subfamily.

It is found in the cytoplasm. It carries out the reaction phosphoenolpyruvate + UDP-N-acetyl-alpha-D-glucosamine = UDP-N-acetyl-3-O-(1-carboxyvinyl)-alpha-D-glucosamine + phosphate. The protein operates within cell wall biogenesis; peptidoglycan biosynthesis. In terms of biological role, cell wall formation. Adds enolpyruvyl to UDP-N-acetylglucosamine. This Stutzerimonas stutzeri (strain A1501) (Pseudomonas stutzeri) protein is UDP-N-acetylglucosamine 1-carboxyvinyltransferase.